Consider the following 191-residue polypeptide: MSEQLTDQVLVERVQKGDQKAFNLLVVRYQHKVASLVSRYVPSGDVPDVVQESFIKAYRALDSFRGDSAFYTWLYRIAVNTAKNYLVAQGRRPPSSDVDAIEAENFESGGALKEISNPENLMLSEELRQIVFRTIESLPEDLRMAITLRELDGLSYEEIAAIMDCPVGTVRSRIFRAREAIDNKVQPLIRR.

The binds RNAP core stretch occupies residues 1 to 153 (MSEQLTDQVL…MAITLRELDG (153 aa)). Residues 25-92 (LVVRYQHKVA…KNYLVAQGRR (68 aa)) form a sigma-70 factor domain-2 region. Residues 48–61 (DVVQESFIKAYRAL) carry the Polymerase core binding motif. Positions 129–180 (QIVFRTIESLPEDLRMAITLRELDGLSYEEIAAIMDCPVGTVRSRIFRAREA) are sigma-70 factor domain-4. A DNA-binding region (H-T-H motif) is located at residues 156–175 (YEEIAAIMDCPVGTVRSRIF).

This sequence belongs to the sigma-70 factor family. ECF subfamily. As to quaternary structure, interacts transiently with the RNAP catalytic core formed by RpoA, RpoB, RpoC and RpoZ (2 alpha, 1 beta, 1 beta' and 1 omega subunit) to form the RNAP holoenzyme that can initiate transcription. Interacts 1:1 with anti-sigma-E factor RseA which prevents binding to RNAP catalytic core.

The protein localises to the cytoplasm. Its activity is regulated as follows. ECF sigma-E is held in an inactive form by its cognate anti-sigma factor (RseA) until released by regulated intramembrane proteolysis (RIP). RIP occurs when an extracytoplasmic signal (periplasmic, acid or heat stress) triggers a concerted proteolytic cascade to transmit information and elicit cellular responses. In S.typhimurium there are 2 cascades, the heat shock response which depends on DegS and RseP, and acid response which depends only on RseP. The anti-sigma factor RseA is an inner membrane protein, binding sigma-E in the cytoplasm and RseB in the periplasm. RseA is first cut extracytoplasmically (site-1 protease, S1P, by DegS), then within the membrane itself (site-2 protease, S2P, by RseP), while cytoplasmic proteases (predominantly ClpX-ClpP) finish degrading the regulatory protein, liberating sigma-E. Degradation of RseA requires 2 signals to activate DegS; an outer membrane protein (OMP) signal activates DegS, while an LPS signal causes release of RseB from RseA, freeing RseA to be cleaved. OMP stress can be abrogated by overexpression of the sRNA rybB. Functionally, sigma factors are initiation factors that promote the attachment of RNA polymerase (RNAP) to specific initiation sites and are then released. Extracytoplasmic function (ECF) sigma-E controls the envelope stress response, responding to periplasmic protein stress, increased levels of periplasmic lipopolysaccharide (LPS) as well as acid stress, heat shock and oxidative stress; it controls protein processing in the extracytoplasmic compartment. In Salmonella typhimurium (strain 14028s / SGSC 2262), this protein is ECF RNA polymerase sigma-E factor (rpoE).